Reading from the N-terminus, the 152-residue chain is Ribosome maturation factor RimP (152 aa).

It belongs to the RimP family.

The protein resides in the cytoplasm. Required for maturation of 30S ribosomal subunits. The sequence is that of Ribosome maturation factor RimP from Pseudomonas putida (strain GB-1).